A 597-amino-acid polypeptide reads, in one-letter code: Plasmepsin V (597 aa).

The Lumenal portion of the chain corresponds to 1–551 (MNNYFLRKEN…EKENIFLKVS (551 aa)). Residues 33–88 (CNNVENKIDNVGKKIENVGKKIGDMENKNDNVENKNDNVENKNDNVGNKNDNVKNA) adopt a coiled-coil conformation. Basic and acidic residues predominate over residues 58–75 (ENKNDNVENKNDNVENKN). The interval 58 to 83 (ENKNDNVENKNDNVENKNDNVGNKND) is disordered. Residues 107–521 (YFLDIDIGKP…DLQQNQIAFI (415 aa)) enclose the Peptidase A1 domain. Asp-125 is a catalytic residue. Intrachain disulfides connect Cys-135–Cys-218, Cys-138–Cys-141, Cys-162–Cys-173, Cys-167–Cys-178, Cys-266–Cys-525, Cys-396–Cys-441, and Cys-450–Cys-486. Positions 289–298 (KEKQKMDKSD) are enriched in basic and acidic residues. The disordered stretch occupies residues 289–323 (KEKQKMDKSDNNSSNKGNVSIKLKNNDKNDDEENN). Positions 299–311 (NNSSNKGNVSIKL) are enriched in low complexity. The active site involves Asp-372. The chain crosses the membrane as a helical span at residues 552–572 (YINLYCLWLLLALTILLSLIL). Topologically, residues 573–597 (YVRKMFYMDYFPLSDQNKSPIQEST) are cytoplasmic.

The protein belongs to the peptidase A1 family. Component of a complex composed of SPC25 and PMV; the interaction is mediated via the transmembrane domains. The complex interacts with the SEC61 channel-forming translocon complex and is involved in the recognition and import of PEXEL motif-containing proteins into the ER for subsequent export. Post-translationally, it is not clear if the zymogen has a cleavable propeptide. In vitro, appears to be cleaved between Asn-87 and Ala-88. Cleavage of the putative propeptide is dispensable for catalytic activity.

Its subcellular location is the endoplasmic reticulum membrane. Functionally, during the asexual blood stage, plays an essential role in the export of several proteins into the host erythrocytes by cleaving the pentameric localization motif RxLxE/Q/D (termed Plasmodium export element (PEXEL)) located downstream of the N-terminal secretory signal sequence. Specifically, cleaves after the leucine residue in the RxLxE/Q/D (or RxLxxE) motif of exported proteins including RESA, EMP2, EMP3, KAHRP, RIF/Rifin and STEVOR. Also, by regulating protein export, plays an essential role in gametocyte development and thus parasite transmission to the mosquito vector. The sequence is that of Plasmepsin V from Plasmodium falciparum (isolate HB3).